Reading from the N-terminus, the 247-residue chain is 2,3-bisphosphoglycerate-dependent phosphoglycerate mutase (247 aa).

Residues 9-16 (RHGESEWN), 22-23 (TG), R61, 88-91 (ERHY), K99, 115-116 (RR), and 183-184 (GN) contribute to the substrate site. The Tele-phosphohistidine intermediate role is filled by H10. E88 acts as the Proton donor/acceptor in catalysis.

It belongs to the phosphoglycerate mutase family. BPG-dependent PGAM subfamily.

The enzyme catalyses (2R)-2-phosphoglycerate = (2R)-3-phosphoglycerate. Its pathway is carbohydrate degradation; glycolysis; pyruvate from D-glyceraldehyde 3-phosphate: step 3/5. Functionally, catalyzes the interconversion of 2-phosphoglycerate and 3-phosphoglycerate. The polypeptide is 2,3-bisphosphoglycerate-dependent phosphoglycerate mutase (Nocardioides sp. (strain ATCC BAA-499 / JS614)).